The chain runs to 265 residues: Uroporphyrinogen-III synthase (265 aa).

Belongs to the uroporphyrinogen-III synthase family. As to quaternary structure, monomer.

The protein localises to the cytoplasm. It is found in the cytosol. It catalyses the reaction hydroxymethylbilane = uroporphyrinogen III + H2O. It functions in the pathway porphyrin-containing compound metabolism; protoporphyrin-IX biosynthesis; coproporphyrinogen-III from 5-aminolevulinate: step 3/4. In terms of biological role, catalyzes cyclization of the linear tetrapyrrole, hydroxymethylbilane, to the macrocyclic uroporphyrinogen III, the branch point for the various sub-pathways leading to the wide diversity of porphyrins. Porphyrins act as cofactors for a multitude of enzymes that perform a variety of processes within the cell such as methionine synthesis (vitamin B12) or oxygen transport (heme). The sequence is that of Uroporphyrinogen-III synthase (Uros) from Mus musculus (Mouse).